The following is a 1437-amino-acid chain: Protein SUPPRESSOR OF npr1-1, CONSTITUTIVE 1 (1437 aa).

Position 1 is an N-acetylmethionine (methionine 1). The TIR domain occupies 19–182 (RRYDVFPSFR…ELAEDVLRKT (164 aa)). An NAD(+)-binding site is contributed by 28–33 (RGEDVR). Glutamate 93 is an active-site residue. 23 LRR repeats span residues 554-576 (MRNLQYLEIGYYGDLPQSLVYLP), 577-598 (LKLRLLDWDDCPLKSLPSTFKA), 600-621 (YLVNLIMKYSKLEKLWEGTLPL), 622-645 (GSLKEMNLRYSNNLKEIPDLSLAI), 647-668 (LEELDLVGCKSLVTLPSSIQNA), 670-691 (KLIYLDMSDCKKLESFPTDLNL), 692-715 (ESLEYLNLTGCPNLRNFPAIKMGC), 781-805 (LGSLEGMDLSESENLTEIPDLSKAT), 807-828 (LESLILNNCKSLVTLPSTIGNL), 829-851 (HRLVRLEMKECTGLEVLPTDVNL), 852-875 (SSLETLDLSGCSSLRSFPLISTNI), 877-895 (WLYLENTAIEEIPSTIGNL), 897-918 (RLVRLEMKKCTGLEVLPTDVNL), 919-939 (SSLETLDLSGCSSLRSFPLIS), 940-962 (ESIKWLYLENTAIEEIPDLSKAT), 964-985 (LKNLKLNNCKSLVTLPTTIGNL), 1009-1029 (SSLMILDLSGCSSLRTFPLIS), 1030-1052 (TNIVWLYLENTAIEEIPSTIGNL), 1054-1075 (RLVKLEMKECTGLEVLPTDVNL), 1076-1096 (SSLMILDLSGCSSLRTFPLIS), 1097-1121 (TRIECLYLQNTAIEEVPCCIEDFTR), 1123-1143 (TVLMMYCCQRLKTISPNIFRL), and 1161-1185 (LSDATVVATMEDHVSCVPLSENIEY).

The protein belongs to the disease resistance TIR-NB-LRR family. Homodimer. Interacts (via TIR domain) with TPR1. Interacts with EDS1. Interacts with SRFR1. Interacts with HSP90-3. Binds to MORC1/CRT1. Interacts with TRAF1B. Met-1 is specifically acetylated by N-terminal acetyltransferase complex A (NatA). The NatA-mediated acetylation serves as a degradation signal. In terms of processing, met-1 is specifically acetylated by N-terminal acetyltransferase complex B (NatB). The NatB-mediated acetylation stabilizes SNC1. In terms of tissue distribution, expressed in guard cells and epidermal cells, but not detected in mesophyll cells.

Its subcellular location is the cytoplasm. The protein resides in the microsome. It localises to the nucleus. The catalysed reaction is NAD(+) + H2O = ADP-D-ribose + nicotinamide + H(+). In terms of biological role, disease resistance protein of the TIR-NB-LRR-type. Part of the RPP5 locus that contains a cluster of several paralogous disease resistance (R) genes. Resistance proteins guard the plant against pathogens that contain an appropriate avirulence protein via an indirect interaction with this avirulence protein. That triggers a defense system including the hypersensitive response, which restricts the pathogen growth. Probably acts as a NAD(+) hydrolase (NADase): in response to activation, catalyzes cleavage of NAD(+) into ADP-D-ribose (ADPR) and nicotinamide; NAD(+) cleavage triggering a defense system that promotes cell death. Expression regulated by MOS1 at chromatin level. Nuclear localization of SNC1 is essential for its activity. ABA deficiency can rescue high-temperature inhibition of SNC1-mediated defense responses. The chain is Protein SUPPRESSOR OF npr1-1, CONSTITUTIVE 1 from Arabidopsis thaliana (Mouse-ear cress).